A 504-amino-acid chain; its full sequence is Diacylglycerol O-acyltransferase 1B (504 aa).

A disordered region spans residues 1–72; sequence MAISDEPESV…VNSQQQNEKQ (72 aa). Residues 24-41 show a composition bias toward polar residues; it reads SATSTAGLFNSPETTTDS. Low complexity predominate over residues 53–65; that stretch reads DDSINSDDAAVNS. 7 consecutive transmembrane segments (helical) span residues 108 to 128, 152 to 172, 184 to 204, 209 to 229, 259 to 279, 301 to 321, and 348 to 368; these read HAGL…RLII, WPLF…FIVE, VVVV…VLVI, SAFV…LKLV, YPYN…TLCY, LIIF…PIVQ, and VWLC…AELL. The short motif at 375 to 381 is the FYXDWWN motif element; sequence FYKDWWN. 3 helical membrane passes run 416–436, 438–458, and 471–491; these read AAAL…CIAV, CHIF…LVLI, and VGNM…CVLL. The active site involves histidine 430.

This sequence belongs to the membrane-bound acyltransferase family. Sterol o-acyltransferase subfamily. As to expression, highly expressed in flowers and pods. Expressed at low levels in roots, stems and leaves.

Its subcellular location is the endoplasmic reticulum membrane. It catalyses the reaction an acyl-CoA + a 1,2-diacyl-sn-glycerol = a triacyl-sn-glycerol + CoA. The protein operates within glycerolipid metabolism; triacylglycerol biosynthesis. In terms of biological role, major contributors to triacylglycerol (TAG) synthesis and oil accumulation in developing seeds. Catalyzes the acylation of the sn-3 hydroxy group of sn-1,2-diacylglycerol using acyl-CoA. Has a marked preference for oleoyl-CoA and sn-1,2-dioleoylglycerol over vernoloyl-CoA and sn-1,2-divernoloylglycerol. This chain is Diacylglycerol O-acyltransferase 1B, found in Glycine max (Soybean).